Here is a 462-residue protein sequence, read N- to C-terminus: Cytochrome P450 20A1 (462 aa).

A helical transmembrane segment spans residues 4 to 24; it reads FAIFAVTFLLALVGAVLYLYP. Position 409 (Cys409) interacts with heme.

It belongs to the cytochrome P450 family. It depends on heme as a cofactor.

It localises to the membrane. The sequence is that of Cytochrome P450 20A1 (CYP20A1) from Bos taurus (Bovine).